The sequence spans 150 residues: Ribosome maturation factor RimP (150 aa).

It belongs to the RimP family.

It is found in the cytoplasm. Its function is as follows. Required for maturation of 30S ribosomal subunits. This Escherichia coli O9:H4 (strain HS) protein is Ribosome maturation factor RimP.